The following is a 70-amino-acid chain: SPbeta prophage-derived uncharacterized HTH-type transcriptional regulator YopO (70 aa).

One can recognise an HTH cro/C1-type domain in the interval 5-59 (IKQLMVKRGITIEELSRETMIDMQTLNKIIEMPDESDVTTIKLIALVLNVSIDEL). The H-T-H motif DNA-binding region spans 16 to 35 (IEELSRETMIDMQTLNKIIE).

The protein is SPbeta prophage-derived uncharacterized HTH-type transcriptional regulator YopO (yopO) of Bacillus subtilis (strain 168).